A 192-amino-acid polypeptide reads, in one-letter code: NADH-quinone oxidoreductase subunit B (192 aa).

4 residues coordinate [4Fe-4S] cluster: Cys-71, Cys-72, Cys-136, and Cys-166.

The protein belongs to the complex I 20 kDa subunit family. In terms of assembly, NDH-1 is composed of 14 different subunits. Subunits NuoB, C, D, E, F, and G constitute the peripheral sector of the complex. [4Fe-4S] cluster is required as a cofactor.

The protein resides in the cell inner membrane. It carries out the reaction a quinone + NADH + 5 H(+)(in) = a quinol + NAD(+) + 4 H(+)(out). NDH-1 shuttles electrons from NADH, via FMN and iron-sulfur (Fe-S) centers, to quinones in the respiratory chain. The immediate electron acceptor for the enzyme in this species is believed to be ubiquinone. Couples the redox reaction to proton translocation (for every two electrons transferred, four hydrogen ions are translocated across the cytoplasmic membrane), and thus conserves the redox energy in a proton gradient. This chain is NADH-quinone oxidoreductase subunit B, found in Sinorhizobium medicae (strain WSM419) (Ensifer medicae).